A 301-amino-acid polypeptide reads, in one-letter code: Ubiquitin thioesterase OTU1 (301 aa).

The interval Lys-4–Ser-80 is UBX-like. The 121-residue stretch at Leu-109–Asn-229 folds into the OTU domain. The interval Val-114–Cys-120 is cys-loop. Asp-117 is an active-site residue. Cys-120 (nucleophile) is an active-site residue. Residue Lys-160 forms a Glycyl lysine isopeptide (Lys-Gly) (interchain with G-Cter in ubiquitin) linkage. The interval Ile-169–Ile-179 is variable-loop. The interval Phe-218–His-222 is his-loop. Residue Ile-221 participates in substrate binding. Residue His-222 is part of the active site. An S2 site region spans residues Asp-243 to Ala-248. The segment at Ile-270–His-294 adopts a C2H2-type zinc-finger fold. His-294 is an active-site residue.

In terms of assembly, forms a complex composed of CDC48, NPL4, UFD1, DOA1, SHP1 and deubiquitinase OTU1; within the complex interacts with CDC48 and DOA1/UFD3.

It localises to the cytoplasm. The protein localises to the nucleus. The enzyme catalyses Thiol-dependent hydrolysis of ester, thioester, amide, peptide and isopeptide bonds formed by the C-terminal Gly of ubiquitin (a 76-residue protein attached to proteins as an intracellular targeting signal).. Its function is as follows. Hydrolase that can remove conjugated ubiquitin from proteins and may therefore play an important regulatory role at the level of protein turnover by preventing degradation. Participates in the regulation of the ubiquitin conjugation pathway involving CDC48 by hindering multiubiquitination of substrates at the CDC48 chaperone. May be indirectly involved in PIS1 gene expression. This chain is Ubiquitin thioesterase OTU1 (OTU1), found in Saccharomyces cerevisiae (strain ATCC 204508 / S288c) (Baker's yeast).